The following is a 31-amino-acid chain: MHMDIVSLAWAALMVVFTFSLSLVVWGRSGL.

A helical membrane pass occupies residues Ile-5–Val-25.

The protein belongs to the PetN family. The 4 large subunits of the cytochrome b6-f complex are cytochrome b6, subunit IV (17 kDa polypeptide, PetD), cytochrome f and the Rieske protein, while the 4 small subunits are PetG, PetL, PetM and PetN. The complex functions as a dimer.

It is found in the plastid. It localises to the chloroplast thylakoid membrane. Component of the cytochrome b6-f complex, which mediates electron transfer between photosystem II (PSII) and photosystem I (PSI), cyclic electron flow around PSI, and state transitions. This chain is Cytochrome b6-f complex subunit 8, found in Acorus calamus (Sweet flag).